A 562-amino-acid polypeptide reads, in one-letter code: MDDTKRPLYLPFAGPAILEAPLINKGSAFSEEERIFFNLEGLLPYVIETIEEQAARAYAQFSNFSNDLDKHIYLRNIQDTNETLFYRLVRNNITEMMPIIYTPTVGLACERFSKNYRRNRGLFISYSNKDRIDDILNNSTRHKVKVIVVTDGERILGLGDQGIGGMGIPIGKLSLYTSCGGISPAYTLPITLDVGTDNQELLDDPMYMGWRHRRIEGQDYADFVEAFMEAVHRRWPDVLIQFEDFAQRNAMPLLERYKDQYCCFNDDIQGTAAVTVGSLLAASKAANTQLSKQRVVFLGAGSAGCGIAEAIVAQMISEGISEAQARSQVFMVDRLGLLQDNTANLLPFQQKLAQSSATVSQWHIEGDSVSLLNVINNAKPTVLIGVSGSPGQFTEAVIRAMHLHCPRPIVFPLSNPTSRVEATPEDVLNWTNGQALVATGSPFEPVTIGDETFEIAQCNNSFIFPGIGLGVLACRAKRVSDEMLMASSRALAECSPLGTTRTGSLLPKLDDIQKVSKYIAFAVAKVAMAQGLALPLTDELLNKSIEKNFWEPKYRRYKRTSF.

The active-site Proton donor is the Tyr-101. Arg-154 serves as a coordination point for NAD(+). Lys-172 (proton acceptor) is an active-site residue. The a divalent metal cation site is built by Glu-243, Asp-244, and Asp-267. Positions 267 and 415 each coordinate NAD(+).

This sequence belongs to the malic enzymes family. As to quaternary structure, homotetramer. Mg(2+) serves as cofactor. Requires Mn(2+) as cofactor.

It carries out the reaction (S)-malate + NAD(+) = pyruvate + CO2 + NADH. It catalyses the reaction oxaloacetate + H(+) = pyruvate + CO2. The sequence is that of NAD-dependent malic enzyme from Shewanella denitrificans (strain OS217 / ATCC BAA-1090 / DSM 15013).